The primary structure comprises 306 residues: Probable 2-dehydro-3-deoxygalactonokinase DgoK1 (306 aa).

The protein belongs to the DgoK family.

It catalyses the reaction 2-dehydro-3-deoxy-D-galactonate + ATP = 2-dehydro-3-deoxy-6-phospho-D-galactonate + ADP + H(+). It functions in the pathway carbohydrate acid metabolism; D-galactonate degradation; D-glyceraldehyde 3-phosphate and pyruvate from D-galactonate: step 2/3. Functionally, involved in the degradation of galactose via the DeLey-Doudoroff pathway. In Rhizobium meliloti (strain 1021) (Ensifer meliloti), this protein is Probable 2-dehydro-3-deoxygalactonokinase DgoK1 (dgoK1).